A 207-amino-acid polypeptide reads, in one-letter code: Ribosomal RNA large subunit methyltransferase E (207 aa).

5 residues coordinate S-adenosyl-L-methionine: Gly60, Trp62, Asp80, Asp96, and Asp121. Lys161 (proton acceptor) is an active-site residue.

It belongs to the class I-like SAM-binding methyltransferase superfamily. RNA methyltransferase RlmE family.

The protein resides in the cytoplasm. The enzyme catalyses uridine(2552) in 23S rRNA + S-adenosyl-L-methionine = 2'-O-methyluridine(2552) in 23S rRNA + S-adenosyl-L-homocysteine + H(+). In terms of biological role, specifically methylates the uridine in position 2552 of 23S rRNA at the 2'-O position of the ribose in the fully assembled 50S ribosomal subunit. In Marinobacter nauticus (strain ATCC 700491 / DSM 11845 / VT8) (Marinobacter aquaeolei), this protein is Ribosomal RNA large subunit methyltransferase E.